The primary structure comprises 986 residues: LRR receptor-like serine/threonine-protein kinase ER2 (986 aa).

The N-terminal stretch at 1–21 (MTTTTTTRLLLAAILLAVAAA) is a signal peptide. Over 22-581 (DDDGQTLLEI…VQRSSVSRSA (560 aa)) the chain is Extracellular. Residues Asn64 and Asn73 are each glycosylated (N-linked (GlcNAc...) asparagine). 20 LRR repeats span residues 68-89 (AVAALNLSGLNLGGEISPAIGN), 90-114 (LKSVESIDLKSNELSGQIPDEIGDC), 116-138 (SLKTLDLSSNNLGGDIPFSISKL), 139-161 (KHLENLILKNNQLVGMIPSTLSQ), 162-186 (LPNLKILDLAQNKLNGEIPRLIYWN), 188-210 (VLQYLGLRSNNLEGSLSPEMCQL), 211-233 (TGLWYFDVKNNSLTGIIPDTIGN), 234-259 (CTSFQVLDLSYNRLTGEIPFNIGFLQ), 261-280 (ATLSLQGNNFSGPIPSVIGL), 281-304 (MQALAVLDLSFNQLSGPIPSILGN), 306-329 (TYTEKLYLQGNRLTGSIPPELGNM), 330-352 (STLHYLELNDNQLTGFIPPELGK), 354-377 (TGLFDLNLANNNLEGPIPDNISSC), 379-401 (NLISFNAYGNKLNGTVPRSLHKL), 402-425 (ESITYLNLSSNYLSGAIPIELAKM), 427-449 (NLDTLDLSCNMVAGPIPSAIGSL), 450-472 (EHLLRLNFSNNNLVGYIPAEFGN), 473-498 (LRSIMEIDLSSNHLGGLIPQEVGMLQ), 500-520 (LILLKLESNNITGDVSSLINC), and 521-545 (FSLNVLNVSYNNLAGIVPTDNNFSR). Asn220 and Asn233 each carry an N-linked (GlcNAc...) asparagine glycan. N-linked (GlcNAc...) asparagine glycosylation is found at Asn269, Asn304, and Asn328. N-linked (GlcNAc...) asparagine glycans are attached at residues Asn373, Asn391, and Asn408. A glycan (N-linked (GlcNAc...) asparagine) is linked at Asn456. Asn509, Asn527, and Asn542 each carry an N-linked (GlcNAc...) asparagine glycan. Residues 582–602 (ILGIAVAGLVILLMILAAACW) traverse the membrane as a helical segment. Residues 603–986 (PHWAQVPKDV…FGEVISQNTE (384 aa)) are Cytoplasmic-facing. One can recognise a Protein kinase domain in the interval 653-934 (LSEKYIIGYG…YPDPPSKPAL (282 aa)). Residues 659–667 (IGYGASSTV) and Lys681 contribute to the ATP site. Asp779 serves as the catalytic Proton acceptor.

The protein belongs to the protein kinase superfamily. Ser/Thr protein kinase family.

It is found in the cell membrane. The enzyme catalyses L-seryl-[protein] + ATP = O-phospho-L-seryl-[protein] + ADP + H(+). The catalysed reaction is L-threonyl-[protein] + ATP = O-phospho-L-threonyl-[protein] + ADP + H(+). Its function is as follows. Receptor kinase that may be involved in the regulation of cell proliferation and cell growth. This Oryza sativa subsp. japonica (Rice) protein is LRR receptor-like serine/threonine-protein kinase ER2.